Reading from the N-terminus, the 318-residue chain is Ribosomal protein L11 methyltransferase (318 aa).

The S-adenosyl-L-methionine site is built by T161, G182, D204, and N247.

This sequence belongs to the methyltransferase superfamily. PrmA family.

It localises to the cytoplasm. It catalyses the reaction L-lysyl-[protein] + 3 S-adenosyl-L-methionine = N(6),N(6),N(6)-trimethyl-L-lysyl-[protein] + 3 S-adenosyl-L-homocysteine + 3 H(+). Methylates ribosomal protein L11. The chain is Ribosomal protein L11 methyltransferase from Moorella thermoacetica (strain ATCC 39073 / JCM 9320).